We begin with the raw amino-acid sequence, 828 residues long: Glycerol-3-phosphate acyltransferase (828 aa).

The short motif at 310–315 (HRSHID) is the HXXXXD motif element.

This sequence belongs to the GPAT/DAPAT family.

Its subcellular location is the cell inner membrane. The enzyme catalyses sn-glycerol 3-phosphate + an acyl-CoA = a 1-acyl-sn-glycero-3-phosphate + CoA. It functions in the pathway phospholipid metabolism; CDP-diacylglycerol biosynthesis; CDP-diacylglycerol from sn-glycerol 3-phosphate: step 1/3. The sequence is that of Glycerol-3-phosphate acyltransferase from Pseudomonas putida (strain ATCC 47054 / DSM 6125 / CFBP 8728 / NCIMB 11950 / KT2440).